Here is a 302-residue protein sequence, read N- to C-terminus: Small ribosomal subunit protein uS2 (302 aa).

The disordered stretch occupies residues 275-302 (EGEGESEAEPVVAKKKPVRAKRPAVKAE). Basic residues predominate over residues 287 to 302 (AKKKPVRAKRPAVKAE).

This sequence belongs to the universal ribosomal protein uS2 family.

This is Small ribosomal subunit protein uS2 from Opitutus terrae (strain DSM 11246 / JCM 15787 / PB90-1).